The sequence spans 397 residues: NADH-quinone oxidoreductase subunit H 1 (397 aa).

10 helical membrane passes run 7–27 (FIFI…TTLA), 84–104 (PFLA…GPVI), 120–140 (IGVL…ALAG), 156–176 (SAQM…PLLI), 198–218 (LLSG…AAFA), 258–278 (MITV…APWP), 279–299 (AAYG…LVLL), 313–333 (TFPA…LPMV), 337–357 (LLPL…FMWI), and 376–396 (FLFP…AWTT).

This sequence belongs to the complex I subunit 1 family. In terms of assembly, NDH-1 is composed of 14 different subunits. Subunits NuoA, H, J, K, L, M, N constitute the membrane sector of the complex.

The protein resides in the cell inner membrane. The enzyme catalyses a quinone + NADH + 5 H(+)(in) = a quinol + NAD(+) + 4 H(+)(out). In terms of biological role, NDH-1 shuttles electrons from NADH, via FMN and iron-sulfur (Fe-S) centers, to quinones in the respiratory chain. The immediate electron acceptor for the enzyme in this species is believed to be ubiquinone. Couples the redox reaction to proton translocation (for every two electrons transferred, four hydrogen ions are translocated across the cytoplasmic membrane), and thus conserves the redox energy in a proton gradient. This subunit may bind ubiquinone. The protein is NADH-quinone oxidoreductase subunit H 1 of Solibacter usitatus (strain Ellin6076).